Reading from the N-terminus, the 209-residue chain is Kynurenine formamidase (209 aa).

A substrate-binding site is contributed by Trp-19. 3 residues coordinate Zn(2+): His-49, His-53, and Asp-55. The active-site Proton donor/acceptor is the His-59. Residues His-160 and Glu-172 each contribute to the Zn(2+) site.

It belongs to the Cyclase 1 superfamily. KynB family. In terms of assembly, homodimer. Requires Zn(2+) as cofactor.

The catalysed reaction is N-formyl-L-kynurenine + H2O = L-kynurenine + formate + H(+). It functions in the pathway amino-acid degradation; L-tryptophan degradation via kynurenine pathway; L-kynurenine from L-tryptophan: step 2/2. In terms of biological role, catalyzes the hydrolysis of N-formyl-L-kynurenine to L-kynurenine, the second step in the kynurenine pathway of tryptophan degradation. The sequence is that of Kynurenine formamidase from Ralstonia nicotianae (strain ATCC BAA-1114 / GMI1000) (Ralstonia solanacearum).